The sequence spans 568 residues: MFS-type efflux transporter phmH (568 aa).

Polar residues predominate over residues 1–11; the sequence is MVSGTDTTEVG. A disordered region spans residues 1-39; it reads MVSGTDTTEVGATTKAPPSEGTEGILDDHSSNSQPQAEK. 7 consecutive transmembrane segments (helical) span residues 45–65, 101–121, 134–154, 161–181, 199–219, 237–257, and 268–288; these read YPLS…VSAL, YVMI…GGSS, GIGA…LVPM, IGLL…VGGI, IFYI…LFLH, VIGN…LTYG, and IAAP…WEMS. A glycan (N-linked (GlcNAc...) asparagine) is linked at Asn-303. A run of 6 helical transmembrane segments spans residues 307–327, 344–364, 372–392, 399–419, 437–457, and 515–535; these read AAAF…NFFY, VYTL…GAIV, TVHL…SILD, EWVI…STTL, TWSF…AAIF, and IGIV…EIHL. A glycan (N-linked (GlcNAc...) asparagine) is linked at Asn-563.

The protein belongs to the major facilitator superfamily.

The protein resides in the cell membrane. MFS-type efflux transporter; part of the gene cluster that mediates the biosynthesis of thethe mycotoxins phomacins, leucine-derived cytochalasans with potent actin polymerization-inhibitory activities and monocot-specific antigerminative activities. PhmH might be involved in the excretion of phomacins. The protein is MFS-type efflux transporter phmH of Phaeosphaeria nodorum (strain SN15 / ATCC MYA-4574 / FGSC 10173) (Glume blotch fungus).